The following is a 204-amino-acid chain: 3-isopropylmalate dehydratase small subunit (204 aa).

The protein belongs to the LeuD family. LeuD type 1 subfamily. As to quaternary structure, heterodimer of LeuC and LeuD.

The enzyme catalyses (2R,3S)-3-isopropylmalate = (2S)-2-isopropylmalate. It functions in the pathway amino-acid biosynthesis; L-leucine biosynthesis; L-leucine from 3-methyl-2-oxobutanoate: step 2/4. In terms of biological role, catalyzes the isomerization between 2-isopropylmalate and 3-isopropylmalate, via the formation of 2-isopropylmaleate. The chain is 3-isopropylmalate dehydratase small subunit from Roseiflexus castenholzii (strain DSM 13941 / HLO8).